Consider the following 261-residue polypeptide: Bidirectional sugar transporter SWEET1b (261 aa).

Residues 1 to 6 lie on the Extracellular side of the membrane; sequence MEDLAK. A helical membrane pass occupies residues 7–27; that stretch reads FLFGVSGNVIALFLFLSPVPT. The region spanning 7 to 95 is the MtN3/slv 1 domain; sequence FLFGVSGNVI…VVFLVFASTH (89 aa). At 28-42 the chain is on the cytoplasmic side; that stretch reads FWRIIRRKSTEDFSG. A helical transmembrane segment spans residues 43–63; it reads VPYNMTLINCLLSAWYGLPFV. Residues 64–71 lie on the Extracellular side of the membrane; sequence SPNNILVS. The chain crosses the membrane as a helical span at residues 72–92; the sequence is TINGAGAVIETAYVVVFLVFA. Over 93 to 101 the chain is Cytoplasmic; the sequence is STHKTRLRT. Residues 102 to 122 traverse the membrane as a helical segment; it reads LGLAAAVASVFAAVALVSLLA. The Extracellular portion of the chain corresponds to 123–129; sequence LHGQHRK. Residues 130–150 traverse the membrane as a helical segment; sequence LLCGVAATVCSICMYASPLSI. In terms of domain architecture, MtN3/slv 2 spans 133-215; that stretch reads GVAATVCSIC…VLYAIYRNNK (83 aa). The Cytoplasmic portion of the chain corresponds to 151–164; that stretch reads MRLVIKTKSVEYMP. Residues 165–185 form a helical membrane-spanning segment; sequence FLLSLAVFLCGTSWFIYGLLG. Topologically, residues 186–189 are extracellular; the sequence is RDPF. A helical transmembrane segment spans residues 190–210; it reads VTIPNGCGSFLGAVQLVLYAI. At 211-261 the chain is on the cytoplasmic side; sequence YRNNKGAGGGSGGKQAGDDDVEMAEGRNNKVADGGAAEDDSTAGGKAGTEV. The segment at 218–261 is disordered; it reads GGGSGGKQAGDDDVEMAEGRNNKVADGGAAEDDSTAGGKAGTEV.

It belongs to the SWEET sugar transporter family. As to quaternary structure, forms homodimers.

Its subcellular location is the cell membrane. It catalyses the reaction D-glucose(out) = D-glucose(in). It carries out the reaction D-galactose(in) = D-galactose(out). Its function is as follows. Mediates transport of sugars across the plasma membrane. Can transport glucose and galactose, but not fructose, mannose and sucrose. This is Bidirectional sugar transporter SWEET1b (SWEET1B) from Oryza sativa subsp. indica (Rice).